A 438-amino-acid polypeptide reads, in one-letter code: (S)-3,5-dihydroxyphenylglycine transaminase (438 aa).

Position 266 is an N6-(pyridoxal phosphate)lysine (K266).

It belongs to the class-I pyridoxal-phosphate-dependent aminotransferase family. It depends on pyridoxal 5'-phosphate as a cofactor.

The enzyme catalyses (S)-3,5-dihydroxyphenylglycine + 2-oxoglutarate = 2-(3,5-dihydroxyphenyl)-2-oxoacetate + L-glutamate. Its pathway is antibiotic biosynthesis; vancomycin biosynthesis. Its function is as follows. Catalyzes the transamination of p-hydroxybenzoylformate to L-p-hydroxyphenylglycine as part of the biosynthesis of the (S)-3,5-dihydroxyphenylglycine constituent of the glycopeptide antibiotic chloroeremomycin, a member of the vancomycin group of antibiotics. The protein is (S)-3,5-dihydroxyphenylglycine transaminase (hpgT) of Amycolatopsis orientalis (Nocardia orientalis).